We begin with the raw amino-acid sequence, 217 residues long: tRNA (guanine-N(7)-)-methyltransferase (217 aa).

Residues glutamate 44, glutamate 69, asparagine 96, and aspartate 118 each contribute to the S-adenosyl-L-methionine site. The active site involves aspartate 118. A substrate-binding site is contributed by lysine 122. Residues 124 to 129 (RHEKRR) form an interaction with RNA region. Residues aspartate 154 and 191 to 194 (TEYE) contribute to the substrate site.

This sequence belongs to the class I-like SAM-binding methyltransferase superfamily. TrmB family.

It catalyses the reaction guanosine(46) in tRNA + S-adenosyl-L-methionine = N(7)-methylguanosine(46) in tRNA + S-adenosyl-L-homocysteine. It participates in tRNA modification; N(7)-methylguanine-tRNA biosynthesis. Its function is as follows. Catalyzes the formation of N(7)-methylguanine at position 46 (m7G46) in tRNA. This Geobacillus kaustophilus (strain HTA426) protein is tRNA (guanine-N(7)-)-methyltransferase.